A 580-amino-acid polypeptide reads, in one-letter code: External alternative NAD(P)H-ubiquinone oxidoreductase B3, mitochondrial (580 aa).

The transit peptide at 1–38 (MRPFAYFERLSQAFHDYPSLSKILVVSTISGGGLIVYS) directs the protein to the mitochondrion. Position 57–87 (57–87 (KVVLLGTGWAGASFLKTLNNSSYEVQVISPR)) interacts with FAD. Residue 221–257 (LHFVVVGGGPTGVEFASELHDFVNEDLVKLYPKAKNL) coordinates NAD(+). An EF-hand domain is found at 377-412 (KVMEDIAAIFKKADKENSGTLTMKEFHEVMSDICDR). Positions 390, 394, 396, and 401 each coordinate Ca(2+). A Microbody targeting signal motif is present at residues 571-580 (FIFGRDSSRI).

This sequence belongs to the NADH dehydrogenase family. The cofactor is FAD. In terms of tissue distribution, expressed at low levels in seedlings, roots, stems, buds and flowers and, to a lower extent, in leaves and cotyledons.

It localises to the mitochondrion inner membrane. Its subcellular location is the peroxisome. It catalyses the reaction a quinone + NADH + H(+) = a quinol + NAD(+). The catalysed reaction is a ubiquinone + NADH + H(+) = a ubiquinol + NAD(+). Its function is as follows. Alternative NADH-ubiquinone oxidoreductase which catalyzes the oxidation of mitochondrial NADH does not translocate protons across the inner mitochondrial membrane. This chain is External alternative NAD(P)H-ubiquinone oxidoreductase B3, mitochondrial (NDB3), found in Arabidopsis thaliana (Mouse-ear cress).